A 327-amino-acid chain; its full sequence is uncharacterized protein (327 aa).

This is an uncharacterized protein from Lepidoptera (butterflies and moths).